The following is a 280-amino-acid chain: Phospholipase C D (280 aa).

The tract at residues V258–C280 is disordered.

It belongs to the bacterial phospholipase C family.

It localises to the secreted. The protein localises to the cell wall. The enzyme catalyses a 1,2-diacyl-sn-glycero-3-phosphocholine + H2O = phosphocholine + a 1,2-diacyl-sn-glycerol + H(+). The catalysed reaction is 1,2-dihexadecanoyl-sn-glycero-3-phosphocholine + H2O = 1,2-dihexadecanoyl-sn-glycerol + phosphocholine + H(+). Its function is as follows. Involved in virulence. Induces cytotoxic effects on mouse macrophage cell lines, via direct or indirect enzymatic hydrolysis of cell membrane phospholipids. Hydrolyzes phosphatidylcholine. Does not have hemolytic activity. This is Phospholipase C D from Mycobacterium tuberculosis (strain ATCC 25618 / H37Rv).